A 445-amino-acid polypeptide reads, in one-letter code: Rab GDP dissociation inhibitor beta (445 aa).

Met-1 bears the N-acetylmethionine mark. At Lys-112 the chain carries N6-acetyllysine. Ser-130 bears the Phosphoserine mark. Lys-269 is subject to N6-acetyllysine. The residue at position 382 (Ser-382) is a Phosphoserine.

Belongs to the Rab GDI family. As to quaternary structure, interacts with RHOH. Interacts with the GDP-bound inactive forms of RAB3A, RAB3B, RAB3C, RAB5A, RAB5B, RAB5C, RAB8A, RAB8B, RAB10, RAB12, RAB35, and RAB43; binds RAB3D to a lesser extent. Interacts with DZIP1; this interaction negatively regulates the interaction of GDI2 with GDP-bound RAB8A.

It is found in the cytoplasm. Its subcellular location is the membrane. The protein resides in the golgi apparatus. The protein localises to the trans-Golgi network. Functionally, GDP-dissociation inhibitor preventing the GDP to GTP exchange of most Rab proteins. By keeping these small GTPases in their inactive GDP-bound form regulates intracellular membrane trafficking. Negatively regulates protein transport to the cilium and ciliogenesis through the inhibition of RAB8A. This Sus scrofa (Pig) protein is Rab GDP dissociation inhibitor beta (GDI2).